The primary structure comprises 1364 residues: Poly(A) RNA polymerase gld-2 homolog A (1364 aa).

The span at 27 to 51 (NSTNTTASPATTNTINTTTKTITTS) shows a compositional bias: low complexity. 5 disordered regions span residues 27-97 (NSTN…VVHT), 159-203 (SRPS…EAIT), 315-338 (AVGT…VSST), 417-535 (APAT…STST), and 666-732 (LGLD…LSDA). A compositionally biased stretch (basic and acidic residues) spans 66–91 (LEIEDSGRNEPEDLEHGAAKPLEQRK). Low complexity predominate over residues 175–198 (GTTVAASTTPSTTVTTSSGSPGSG). The span at 417–426 (APATGAASSS) shows a compositional bias: low complexity. Residues 427–444 (DQNVATKRNHQGAATQNN) show a composition bias toward polar residues. The segment covering 445 to 455 (HRNRHNAKKGG) has biased composition (basic residues). Positions 461–493 (KELTSNSSESLSNSSSKSQLNKRPSSSSSISPI) are enriched in low complexity. Over residues 494 to 504 (KHPHRNYRNRM) the composition is skewed to basic residues. Residues 509–535 (TEPTEQKAATTTVPISNYQPPQQSTST) are compositionally biased toward polar residues. Positions 993 and 995 each coordinate Mg(2+). In terms of domain architecture, PAP-associated spans 1163–1224 (TLGDLLLSFL…CIEEPFDQTN (62 aa)).

This sequence belongs to the DNA polymerase type-B-like family. GLD2 subfamily. Interacts with Fmr1 and eIF-4E. Mg(2+) serves as cofactor. It depends on Mn(2+) as a cofactor. Expressed in the brain.

It localises to the cytoplasm. The protein localises to the nucleus. It carries out the reaction RNA(n) + ATP = RNA(n)-3'-adenine ribonucleotide + diphosphate. Functionally, cytoplasmic poly(A) RNA polymerase that adds successive AMP monomers to the 3'-end of specific RNAs, forming a poly(A) tail. In contrast to the canonical nuclear poly(A) RNA polymerase, it only adds poly(A) to selected cytoplasmic mRNAs. Required for formation of long term memory. The chain is Poly(A) RNA polymerase gld-2 homolog A (Gld2) from Drosophila melanogaster (Fruit fly).